A 309-amino-acid chain; its full sequence is tRNA pseudouridine synthase B (309 aa).

The active-site Nucleophile is the aspartate 51.

Belongs to the pseudouridine synthase TruB family. Type 1 subfamily.

It catalyses the reaction uridine(55) in tRNA = pseudouridine(55) in tRNA. Responsible for synthesis of pseudouridine from uracil-55 in the psi GC loop of transfer RNAs. This is tRNA pseudouridine synthase B from Coxiella burnetii (strain RSA 493 / Nine Mile phase I).